The sequence spans 69 residues: DNA-directed RNA polymerase subunit omega (69 aa).

It belongs to the RNA polymerase subunit omega family. As to quaternary structure, the RNAP catalytic core consists of 2 alpha, 1 beta, 1 beta' and 1 omega subunit. When a sigma factor is associated with the core the holoenzyme is formed, which can initiate transcription.

It catalyses the reaction RNA(n) + a ribonucleoside 5'-triphosphate = RNA(n+1) + diphosphate. Its function is as follows. Promotes RNA polymerase assembly. Latches the N- and C-terminal regions of the beta' subunit thereby facilitating its interaction with the beta and alpha subunits. The polypeptide is DNA-directed RNA polymerase subunit omega (Hahella chejuensis (strain KCTC 2396)).